We begin with the raw amino-acid sequence, 378 residues long: Cytochrome b (378 aa).

Transmembrane regions (helical) follow at residues 34-54 (FGSL…FLAM), 78-99 (WLLR…YLHV), 114-134 (WLVG…GYVL), and 179-199 (FFTF…IHIL). H84 and H98 together coordinate heme b. The heme b site is built by H183 and H197. Position 202 (H202) interacts with a ubiquinone. The next 4 helical transmembrane spans lie at 227–247 (FKDI…VLIN), 289–309 (LGGV…PFYH), 321–341 (INQI…WIGA), and 348–368 (YVLV…FNPL).

Belongs to the cytochrome b family. In terms of assembly, the main subunits of complex b-c1 are: cytochrome b, cytochrome c1 and the Rieske protein. It depends on heme b as a cofactor.

The protein localises to the mitochondrion inner membrane. Component of the ubiquinol-cytochrome c reductase complex (complex III or cytochrome b-c1 complex) that is part of the mitochondrial respiratory chain. The b-c1 complex mediates electron transfer from ubiquinol to cytochrome c. Contributes to the generation of a proton gradient across the mitochondrial membrane that is then used for ATP synthesis. In Cochliomyia hominivorax (Primary screw-worm), this protein is Cytochrome b (MT-CYB).